The chain runs to 224 residues: Paired immunoglobulin-like type 2 receptor beta (224 aa).

Positions 1–28 (MALLISLPGGTPAMAQVLLLLSSGCLHA) are cleaved as a signal peptide. Topologically, residues 29–195 (GNSERYNRKN…NPSLMNLGAM (167 aa)) are extracellular. Residues asparagine 90, asparagine 107, and asparagine 154 are each glycosylated (N-linked (GlcNAc...) asparagine). Residues 196-216 (VTMLLAKVLVIVLVYGWMIFL) form a helical membrane-spanning segment. The Cytoplasmic portion of the chain corresponds to 217-224 (RWKQRPAH).

As to quaternary structure, interacts with CD99. Probably associates with DAP12. Widely expressed with highest levels in spleen, liver and lung. Predominantly expressed by natural killer cells, macrophages, and granulocytes and dendritic cells (BM-DC).

It localises to the membrane. Functionally, paired receptors consist of highly related activating and inhibitory receptors and are widely involved in the regulation of the immune system. PILRB is thought to act as a cellular signaling activating receptor that associates with ITAM-bearing adapter molecules on the cell surface. Seems to associate with DAP12 and is a receptor for CD99. May be involved in target cell recognition by natural killer cells and in activation of dendritic cells. The protein is Paired immunoglobulin-like type 2 receptor beta (Pilrb) of Mus musculus (Mouse).